The chain runs to 387 residues: Cystathionine gamma-lyase (387 aa).

Substrate is bound by residues Arg53, Tyr105, and Arg110. The residue at position 202 (Lys202) is an N6-(pyridoxal phosphate)lysine. Glu329 is a binding site for substrate.

It belongs to the trans-sulfuration enzymes family. As to quaternary structure, homotetramer. Interacts with CALM in a calcium-dependent manner. Pyridoxal 5'-phosphate serves as cofactor.

The protein resides in the cytoplasm. It carries out the reaction L,L-cystathionine + H2O = 2-oxobutanoate + L-cysteine + NH4(+). It catalyses the reaction L-cysteine + H2O = hydrogen sulfide + pyruvate + NH4(+) + H(+). The enzyme catalyses L-homocysteine + H2O = 2-oxobutanoate + hydrogen sulfide + NH4(+) + H(+). The catalysed reaction is L-homoserine = 2-oxobutanoate + NH4(+). It participates in amino-acid biosynthesis; L-cysteine biosynthesis; L-cysteine from L-homocysteine and L-serine: step 2/2. Catalyzes the last step in the trans-sulfuration pathway from L-methionine to L-cysteine in a pyridoxal-5'-phosphate (PLP)-dependent manner, which consists on cleaving the L,L-cystathionine molecule into L-cysteine, ammonia and 2-oxobutanoate. Part of the L-cysteine derived from the trans-sulfuration pathway is utilized for biosynthesis of the ubiquitous antioxidant glutathione. Besides its role in the conversion of L-cystathionine into L-cysteine, it utilizes L-cysteine and L-homocysteine as substrates (at much lower rates than L,L-cystathionine) to produce the endogenous gaseous signaling molecule hydrogen sulfide (H2S). The polypeptide is Cystathionine gamma-lyase (cysA) (Dictyostelium discoideum (Social amoeba)).